The sequence spans 508 residues: Anthranilate synthase component 1 (508 aa).

L-tryptophan-binding positions include serine 49 and 282–284; that span reads PYM. 317–318 serves as a coordination point for chorismate; that stretch reads GT. Glutamate 344 lines the Mg(2+) pocket. Chorismate is bound by residues tyrosine 432, arginine 452, 466–468, and glycine 468; that span reads GAG. Glutamate 481 is a binding site for Mg(2+).

Belongs to the anthranilate synthase component I family. As to quaternary structure, heterotetramer consisting of two non-identical subunits: a beta subunit (TrpG) and a large alpha subunit (TrpE). Mg(2+) serves as cofactor.

The catalysed reaction is chorismate + L-glutamine = anthranilate + pyruvate + L-glutamate + H(+). Its pathway is amino-acid biosynthesis; L-tryptophan biosynthesis; L-tryptophan from chorismate: step 1/5. Feedback inhibited by tryptophan. Its function is as follows. Part of a heterotetrameric complex that catalyzes the two-step biosynthesis of anthranilate, an intermediate in the biosynthesis of L-tryptophan. In the first step, the glutamine-binding beta subunit (TrpG) of anthranilate synthase (AS) provides the glutamine amidotransferase activity which generates ammonia as a substrate that, along with chorismate, is used in the second step, catalyzed by the large alpha subunit of AS (TrpE) to produce anthranilate. In the absence of TrpG, TrpE can synthesize anthranilate directly from chorismate and high concentrations of ammonia. This Bacillus caldotenax protein is Anthranilate synthase component 1 (trpE).